The primary structure comprises 394 residues: Elongation factor Tu (394 aa).

The tr-type G domain maps to 10-205 (KPHMNVGTIG…TMDNYFDLPQ (196 aa)). The segment at 19–26 (GHVDHGKT) is G1. GTP is bound at residue 19–26 (GHVDHGKT). Threonine 26 contacts Mg(2+). The G2 stretch occupies residues 61-65 (GITIN). The tract at residues 82 to 85 (DCPG) is G3. GTP contacts are provided by residues 82–86 (DCPGH) and 137–140 (NKLD). Residues 137 to 140 (NKLD) form a G4 region. The G5 stretch occupies residues 173 to 175 (SAF).

This sequence belongs to the TRAFAC class translation factor GTPase superfamily. Classic translation factor GTPase family. EF-Tu/EF-1A subfamily. In terms of assembly, monomer.

The protein resides in the cytoplasm. The enzyme catalyses GTP + H2O = GDP + phosphate + H(+). In terms of biological role, GTP hydrolase that promotes the GTP-dependent binding of aminoacyl-tRNA to the A-site of ribosomes during protein biosynthesis. In Borrelia turicatae (strain 91E135), this protein is Elongation factor Tu.